The primary structure comprises 613 residues: Pentatricopeptide repeat-containing protein At2g02750 (613 aa).

PPR repeat units follow at residues 30-64 (NKFT…GFFV), 65-99 (DVFT…GIAS), 101-126 (NAAV…ARVS), 128-162 (SGMN…GFEM), 163-193 (EVYV…VPHK), 194-228 (SVVT…SSEE), 230-264 (NDVT…EFQF), 265-295 (ETMV…LKDT), 297-331 (NLIS…GLKP), 332-366 (DSAT…VMVP), 367-401 (SLKC…AAER), 402-432 (DIFV…FEPK), 435-469 (DPVF…KVEP), 470-500 (SLAT…MQEE), and 506-539 (STEH…PSSS). The type E motif; degenerate stretch occupies residues 540 to 613 (VYSSLLGSCR…VKLPGLSLSG (74 aa)).

The protein belongs to the PPR family. PCMP-E subfamily.

This is Pentatricopeptide repeat-containing protein At2g02750 (PCMP-E22) from Arabidopsis thaliana (Mouse-ear cress).